The primary structure comprises 396 residues: Ribosomal RNA large subunit methyltransferase I (396 aa).

The region spanning 2-81 (SVRLVLAKGR…ESIDIAFFSR (80 aa)) is the PUA domain.

Belongs to the methyltransferase superfamily. RlmI family.

It localises to the cytoplasm. The enzyme catalyses cytidine(1962) in 23S rRNA + S-adenosyl-L-methionine = 5-methylcytidine(1962) in 23S rRNA + S-adenosyl-L-homocysteine + H(+). Specifically methylates the cytosine at position 1962 (m5C1962) of 23S rRNA. This is Ribosomal RNA large subunit methyltransferase I from Shigella boydii serotype 18 (strain CDC 3083-94 / BS512).